The following is a 279-amino-acid chain: Shikimate dehydrogenase (NADP(+)) (279 aa).

Shikimate-binding positions include 20 to 22 (SRS) and Thr-67. The Proton acceptor role is filled by Lys-71. Asp-83 contributes to the NADP(+) binding site. Asn-92 and Asp-108 together coordinate shikimate. NADP(+) contacts are provided by residues 134–138 (GAGGA) and Leu-223. Tyr-225 contacts shikimate. Position 246 (Gly-246) interacts with NADP(+).

The protein belongs to the shikimate dehydrogenase family. In terms of assembly, homodimer.

It catalyses the reaction shikimate + NADP(+) = 3-dehydroshikimate + NADPH + H(+). The protein operates within metabolic intermediate biosynthesis; chorismate biosynthesis; chorismate from D-erythrose 4-phosphate and phosphoenolpyruvate: step 4/7. Functionally, involved in the biosynthesis of the chorismate, which leads to the biosynthesis of aromatic amino acids. Catalyzes the reversible NADPH linked reduction of 3-dehydroshikimate (DHSA) to yield shikimate (SA). This chain is Shikimate dehydrogenase (NADP(+)), found in Cereibacter sphaeroides (strain ATCC 17023 / DSM 158 / JCM 6121 / CCUG 31486 / LMG 2827 / NBRC 12203 / NCIMB 8253 / ATH 2.4.1.) (Rhodobacter sphaeroides).